Here is a 1168-residue protein sequence, read N- to C-terminus: Carboxylic acid reductase (1168 aa).

AMP contacts are provided by residues His-290, Ser-385, 407–408, Thr-412, Asp-485, 497–500, Lys-506, and Lys-606; these read EG and YLDR. Residues 645-720 enclose the Carrier domain; sequence APVLPTLCRA…ALADHIEAAR (76 aa). At Ser-679 the chain carries O-(pantetheine 4'-phosphoryl)serine. Residues 777–780, Arg-804, Arg-814, 844–845, 870–872, Ser-910, Tyr-946, and Lys-950 each bind NADP(+); these read TGFL, DK, and PAA.

This sequence belongs to the ATP-dependent AMP-binding enzyme family. Carboxylic acid reductase subfamily. Requires pantetheine 4'-phosphate as cofactor.

The catalysed reaction is a carboxylate + ATP + NADPH + H(+) = an aldehyde + AMP + diphosphate + NADP(+). It catalyses the reaction a medium-chain fatty acid + ATP + H(+) = a medium-chain fatty acyl-AMP + diphosphate. The enzyme catalyses a long-chain fatty acid + ATP + H(+) = a long-chain fatty acyl-AMP + diphosphate. It carries out the reaction dodecanoate + ATP + H(+) = dodecanoyl-AMP + diphosphate. The catalysed reaction is hexadecanoate + ATP + H(+) = hexadecanoyl-AMP + diphosphate. Its function is as follows. Catalyzes the ATP- and NADPH-dependent reduction of carboxylic acids to the corresponding aldehydes. In vitro, also catalyzes the activation of medium/long-chain fatty acids as acyl-adenylates (acyl-AMP). In Mycobacterium tuberculosis (strain ATCC 25618 / H37Rv), this protein is Carboxylic acid reductase.